The chain runs to 173 residues: Large ribosomal subunit protein uL10 (173 aa).

This sequence belongs to the universal ribosomal protein uL10 family. As to quaternary structure, part of the ribosomal stalk of the 50S ribosomal subunit. The N-terminus interacts with L11 and the large rRNA to form the base of the stalk. The C-terminus forms an elongated spine to which L12 dimers bind in a sequential fashion forming a multimeric L10(L12)X complex.

Functionally, forms part of the ribosomal stalk, playing a central role in the interaction of the ribosome with GTP-bound translation factors. This is Large ribosomal subunit protein uL10 from Corynebacterium aurimucosum (strain ATCC 700975 / DSM 44827 / CIP 107346 / CN-1) (Corynebacterium nigricans).